A 791-amino-acid chain; its full sequence is Genome polyprotein (791 aa).

An interaction with host EXOC1 region spans residues 1–15 (MNNQRKKTGRPSFNM). Residues 1 to 101 (MNNQRKKTGR…LNIMNRRKRS (101 aa)) lie on the Cytoplasmic side of the membrane. Residues 37-72 (LLSGQGPMKLVMAFIAFLRFLAIPPTAGILARWSSF) are hydrophobic; homodimerization of capsid protein C. The propeptide at 101–114 (SVTMLLMLLPTALA) is ER anchor for the capsid protein C, removed in mature form by serine protease NS3. The chain crosses the membrane as a helical span at residues 102–119 (VTMLLMLLPTALAFHLTT). Topologically, residues 120-242 (RGGEPTLIVS…QIQKVETWAL (123 aa)) are extracellular. Residue N183 is glycosylated (N-linked (GlcNAc...) asparagine; by host). A helical membrane pass occupies residues 243–260 (RHPGFTVIGLFLAHAIGT). Position 261 (S261) is a topological domain, cytoplasmic. Residues 262 to 280 (ITQKGIIFILLMLVTPSMA) form a helical membrane-spanning segment. The Extracellular segment spans residues 281-725 (MRCVGIGNRD…IHQIFGTAYG (445 aa)). Intrachain disulfides connect C283–C310, C340–C401, C354–C385, and C372–C396. An N-linked (GlcNAc...) asparagine; by host glycan is attached at N347. Residues 378-391 (DRGWGNGCGLFGKG) form a fusion peptide region. N433 carries N-linked (GlcNAc...) asparagine; by host glycosylation. 2 disulfide bridges follow: C465/C565 and C582/C613. A helical transmembrane segment spans residues 726 to 746 (ILFSGVSWTMKIGIGILLTWL). Topologically, residues 747-752 (GLNSRS) are cytoplasmic. Residues 753–775 (TSLSMTCIAVGMVTLYLGVMVQA) form a helical membrane-spanning segment. Residues 776-791 (DSGCVINWKGKELKCG) lie on the Extracellular side of the membrane. A disulfide bridge links C779 with C790.

As to quaternary structure, homodimer. Interacts (via N-terminus) with host EXOC1 (via C-terminus); this interaction results in EXOC1 degradation through the proteasome degradation pathway. In terms of assembly, forms heterodimers with envelope protein E in the endoplasmic reticulum and Golgi. Homodimer; in the endoplasmic reticulum and Golgi. Interacts with protein prM. Interacts with non-structural protein 1. As to quaternary structure, homodimer; Homohexamer when secreted. Interacts with envelope protein E. In terms of processing, specific enzymatic cleavages in vivo yield mature proteins. Cleavages in the lumen of endoplasmic reticulum are performed by host signal peptidase, wereas cleavages in the cytoplasmic side are performed by serine protease NS3. Signal cleavage at the 2K-4B site requires a prior NS3 protease-mediated cleavage at the 4A-2K site. N-glycosylated. Post-translationally, N-glycosylated. The excreted form is glycosylated and this is required for efficient secretion of the protein from infected cells.

The protein localises to the virion. The protein resides in the host nucleus. It is found in the host cytoplasm. It localises to the host perinuclear region. Its subcellular location is the secreted. The protein localises to the virion membrane. The protein resides in the host endoplasmic reticulum membrane. Functionally, plays a role in virus budding by binding to the cell membrane and gathering the viral RNA into a nucleocapsid that forms the core of a mature virus particle. During virus entry, may induce genome penetration into the host cytoplasm after hemifusion induced by the surface proteins. Can migrate to the cell nucleus where it modulates host functions. Overcomes the anti-viral effects of host EXOC1 by sequestering and degrading the latter through the proteasome degradation pathway. In terms of biological role, inhibits RNA silencing by interfering with host Dicer. Prevents premature fusion activity of envelope proteins in trans-Golgi by binding to envelope protein E at pH6.0. After virion release in extracellular space, gets dissociated from E dimers. Its function is as follows. Acts as a chaperone for envelope protein E during intracellular virion assembly by masking and inactivating envelope protein E fusion peptide. prM is the only viral peptide matured by host furin in the trans-Golgi network probably to avoid catastrophic activation of the viral fusion activity in acidic GolGi compartment prior to virion release. prM-E cleavage is inefficient, and many virions are only partially matured. These uncleaved prM would play a role in immune evasion. Functionally, may play a role in virus budding. Exerts cytotoxic effects by activating a mitochondrial apoptotic pathway through M ectodomain. May display a viroporin activity. In terms of biological role, binds to host cell surface receptor and mediates fusion between viral and cellular membranes. Envelope protein is synthesized in the endoplasmic reticulum in the form of heterodimer with protein prM. They play a role in virion budding in the ER, and the newly formed immature particle is covered with 60 spikes composed of heterodimer between precursor prM and envelope protein E. The virion is transported to the Golgi apparatus where the low pH causes dissociation of PrM-E heterodimers and formation of E homodimers. prM-E cleavage is inefficient, and many virions are only partially matured. These uncleaved prM would play a role in immune evasion. Involved in immune evasion, pathogenesis and viral replication. Once cleaved off the polyprotein, is targeted to three destinations: the viral replication cycle, the plasma membrane and the extracellular compartment. Essential for viral replication. Required for formation of the replication complex and recruitment of other non-structural proteins to the ER-derived membrane structures. Excreted as a hexameric lipoparticle that plays a role against host immune response. Antagonizing the complement function. Binds to the host macrophages and dendritic cells. Inhibits signal transduction originating from Toll-like receptor 3 (TLR3). Its function is as follows. Disrupts the host endothelial glycocalyx layer of host pulmonary microvascular endothelial cells, inducing degradation of sialic acid and shedding of heparan sulfate proteoglycans. NS1 induces expression of sialidases, heparanase, and activates cathepsin L, which activates heparanase via enzymatic cleavage. These effects are probably linked to the endothelial hyperpermeability observed in severe dengue disease. In Dengue virus type 1 (strain Jamaica/CV1636/1977) (DENV-1), this protein is Genome polyprotein.